Here is a 424-residue protein sequence, read N- to C-terminus: Dehydrogenase FUM7 (424 aa).

Belongs to the iron-containing alcohol dehydrogenase family. Fe cation is required as a cofactor.

Its pathway is mycotoxin biosynthesis. Functionally, dehydrogenase; part of the gene cluster that mediates the biosynthesis of fumonisins B1 (FB1), B2 (FB2), B3 (FB3), and B4 (FB4), which are carcinogenic mycotoxins. Within the pathway, FUM7 is involved the addition of the tricarballylic moieties to the carbon backbone. FUM7 dehydrogenase removes the C-3 hydroxyl of citrate to form tricarballylic acid either before or after the CoA activation by the FUM10 acyl-CoA synthetase and FUM14 catalyzed esterification of CoA-activated tricarballylic acid to the C-14 and C-15 hydroxyls of the fumonisin backbone. The biosynthesis starts with the FUM1-catalyzed carbon chain assembly from one molecule of acetyl-CoA, eight molecules of malonyl-CoA, and two molecules of methionine (in S-adenosyl form). The C18 polyketide chain is released from the enzyme by a nucleophilic attack of a carbanion, which is derived from R-carbon of alanine by decarboxylation, on the carbonyl carbon of polyketide acyl chain. This step is catalyzed by the pyridoxal 5'-phosphate-dependent aminoacyl transferase FUM8. The resultant 3-keto intermediate is then stereospecifically reduced to a 3-hydroxyl product by reductase FUM13. Subsequent oxidations at C-10 by the cytochrome P450 monooxygenase FUM2, C-14 and C-15 by FUM6, FUM12 or FUM15, tricarballylic esterification of the hydroxyl groups on C-14 and C-15 by acyltransferase FUM14, and C-5 hydroxylation by 2-keto-glutarate-dependent dioxygenase FUM3 furnish the biosynthesis of fumonisins. The tricarballylic moieties are most likely derived from the citric acid cycle, and their addition to the carbon backbone may involve FUM7, FUM10, FUM11 and FUM14. This Gibberella moniliformis (strain M3125 / FGSC 7600) (Maize ear and stalk rot fungus) protein is Dehydrogenase FUM7.